We begin with the raw amino-acid sequence, 474 residues long: Chromosomal replication initiator protein DnaA (474 aa).

A domain I, interacts with DnaA modulators region spans residues 1 to 73 (MTNIEQERWS…LSCWQAEMPE (73 aa)). The tract at residues 73-130 (EVHRIDLTVRTAMRCAAPAKEQAAPIEPRREDNRAAAHDLRVSATAPVSANHEALGGS) is domain II. Residues 131 to 353 (PLDPRLTFSS…GAINRLLAHS (223 aa)) are domain III, AAA+ region. ATP contacts are provided by G178, G180, K181, and T182. A domain IV, binds dsDNA region spans residues 354 to 474 (KLNAQPVTLE…VESLKRQLQE (121 aa)).

Belongs to the DnaA family. As to quaternary structure, oligomerizes as a right-handed, spiral filament on DNA at oriC.

Its subcellular location is the cytoplasm. In terms of biological role, plays an essential role in the initiation and regulation of chromosomal replication. ATP-DnaA binds to the origin of replication (oriC) to initiate formation of the DNA replication initiation complex once per cell cycle. Binds the DnaA box (a 9 base pair repeat at the origin) and separates the double-stranded (ds)DNA. Forms a right-handed helical filament on oriC DNA; dsDNA binds to the exterior of the filament while single-stranded (ss)DNA is stabiized in the filament's interior. The ATP-DnaA-oriC complex binds and stabilizes one strand of the AT-rich DNA unwinding element (DUE), permitting loading of DNA polymerase. After initiation quickly degrades to an ADP-DnaA complex that is not apt for DNA replication. Binds acidic phospholipids. The protein is Chromosomal replication initiator protein DnaA of Rhodopseudomonas palustris (strain BisA53).